The primary structure comprises 325 residues: N-acetyl-gamma-glutamyl-phosphate reductase (325 aa).

Residue Cys135 is part of the active site.

It belongs to the NAGSA dehydrogenase family. Type 1 subfamily.

The protein localises to the cytoplasm. The enzyme catalyses N-acetyl-L-glutamate 5-semialdehyde + phosphate + NADP(+) = N-acetyl-L-glutamyl 5-phosphate + NADPH + H(+). Its pathway is amino-acid biosynthesis; L-arginine biosynthesis; N(2)-acetyl-L-ornithine from L-glutamate: step 3/4. Catalyzes the NADPH-dependent reduction of N-acetyl-5-glutamyl phosphate to yield N-acetyl-L-glutamate 5-semialdehyde. The sequence is that of N-acetyl-gamma-glutamyl-phosphate reductase from Flavobacterium johnsoniae (strain ATCC 17061 / DSM 2064 / JCM 8514 / BCRC 14874 / CCUG 350202 / NBRC 14942 / NCIMB 11054 / UW101) (Cytophaga johnsonae).